A 300-amino-acid polypeptide reads, in one-letter code: Apolipoprotein E (300 aa).

An N-terminal signal peptide occupies residues 1–18; the sequence is MKVLWAVLVVTLLAGCQA. The tract at residues 74 to 246 is 8 X 22 AA approximate tandem repeats; that stretch reads VLMEDTMKEV…RLDEVREQME (173 aa). 8 consecutive repeat copies span residues 75 to 95, 96 to 117, 118 to 139, 140 to 161, 162 to 183, 184 to 205, 206 to 224, and 225 to 243. At M137 the chain carries Methionine sulfoxide. The residue at position 141 (S141) is a Phosphoserine. The LDL and other lipoprotein receptors binding stretch occupies residues 152-162; the sequence is HLRKLRKRLLR. 156 to 159 lines the heparin pocket; that stretch reads LRKR. The lipid-binding and lipoprotein association stretch occupies residues 204-274; the sequence is TAALTSQPLQ…GWFEPMMEDI (71 aa). Position 220–227 (220–227) interacts with heparin; that stretch reads GERLRGRL. Positions 262 to 274 are specificity for association with VLDL; it reads RLKGWFEPMMEDI.

The protein belongs to the apolipoprotein A1/A4/E family. In terms of assembly, homotetramer. May interact with ABCA1; functionally associated with ABCA1 in the biogenesis of HDLs. May interact with APP/A4 amyloid-beta peptide; the interaction is extremely stable in vitro but its physiological significance is unclear. May interact with MAPT. May interact with MAP2. In the cerebrospinal fluid, interacts with secreted SORL1. Interacts with PMEL; this allows the loading of PMEL luminal fragment on ILVs to induce fibril nucleation. Post-translationally, APOE exists as multiple glycosylated and sialylated glycoforms within cells and in plasma. The extent of glycosylation and sialylation are tissue and context specific. Glycated in plasma VLDL. In terms of processing, phosphorylated by FAM20C in the extracellular medium.

It localises to the secreted. It is found in the extracellular space. The protein resides in the extracellular matrix. The protein localises to the extracellular vesicle. Its subcellular location is the endosome. It localises to the multivesicular body. Its function is as follows. APOE is an apolipoprotein, a protein associating with lipid particles, that mainly functions in lipoprotein-mediated lipid transport between organs via the plasma and interstitial fluids. APOE is a core component of plasma lipoproteins and is involved in their production, conversion and clearance. Apolipoproteins are amphipathic molecules that interact both with lipids of the lipoprotein particle core and the aqueous environment of the plasma. As such, APOE associates with chylomicrons, chylomicron remnants, very low density lipoproteins (VLDL) and intermediate density lipoproteins (IDL) but shows a preferential binding to high-density lipoproteins (HDL). It also binds a wide range of cellular receptors including the LDL receptor/LDLR, the LDL receptor-related proteins LRP1, LRP2 and LRP8 and the very low-density lipoprotein receptor/VLDLR that mediate the cellular uptake of the APOE-containing lipoprotein particles. Finally, APOE also has a heparin-binding activity and binds heparan-sulfate proteoglycans on the surface of cells, a property that supports the capture and the receptor-mediated uptake of APOE-containing lipoproteins by cells. A main function of APOE is to mediate lipoprotein clearance through the uptake of chylomicrons, VLDLs, and HDLs by hepatocytes. APOE is also involved in the biosynthesis by the liver of VLDLs as well as their uptake by peripheral tissues ensuring the delivery of triglycerides and energy storage in muscle, heart and adipose tissues. By participating in the lipoprotein-mediated distribution of lipids among tissues, APOE plays a critical role in plasma and tissues lipid homeostasis. APOE is also involved in two steps of reverse cholesterol transport, the HDLs-mediated transport of cholesterol from peripheral tissues to the liver, and thereby plays an important role in cholesterol homeostasis. First, it is functionally associated with ABCA1 in the biogenesis of HDLs in tissues. Second, it is enriched in circulating HDLs and mediates their uptake by hepatocytes. APOE also plays an important role in lipid transport in the central nervous system, regulating neuron survival and sprouting. The polypeptide is Apolipoprotein E (APOE) (Dinomys branickii (Pacarana)).